The chain runs to 404 residues: Cysteine desulfurase IscS (404 aa).

Pyridoxal 5'-phosphate is bound by residues 75–76 (AT), Asn155, Gln183, and 203–205 (SAH). Position 206 is an N6-(pyridoxal phosphate)lysine (Lys206). Position 243 (Thr243) interacts with pyridoxal 5'-phosphate. The Cysteine persulfide intermediate role is filled by Cys328. Cys328 is a [2Fe-2S] cluster binding site.

Belongs to the class-V pyridoxal-phosphate-dependent aminotransferase family. NifS/IscS subfamily. In terms of assembly, homodimer. Forms a heterotetramer with IscU, interacts with other sulfur acceptors. Pyridoxal 5'-phosphate serves as cofactor.

The protein resides in the cytoplasm. It catalyses the reaction (sulfur carrier)-H + L-cysteine = (sulfur carrier)-SH + L-alanine. Its pathway is cofactor biosynthesis; iron-sulfur cluster biosynthesis. Functionally, master enzyme that delivers sulfur to a number of partners involved in Fe-S cluster assembly, tRNA modification or cofactor biosynthesis. Catalyzes the removal of elemental sulfur atoms from cysteine to produce alanine. Functions as a sulfur delivery protein for Fe-S cluster synthesis onto IscU, an Fe-S scaffold assembly protein, as well as other S acceptor proteins. The protein is Cysteine desulfurase IscS of Vesicomyosocius okutanii subsp. Calyptogena okutanii (strain HA).